Here is a 1027-residue protein sequence, read N- to C-terminus: Scavenger receptor cysteine-rich domain-containing protein SCART1 (1027 aa).

The N-terminal stretch at 1 to 19 is a signal peptide; it reads MRAALWTLGLGPLLLNLWA. Over 20 to 906 the chain is Extracellular; that stretch reads VPIGGPGALR…APFRTFWVVS (887 aa). Residues 28–128 form the SRCR 1 domain; it reads LRLAYRHSTC…HAWVVVALCS (101 aa). 3 cysteine pairs are disulfide-bonded: Cys-53–Cys-117, Cys-66–Cys-127, and Cys-97–Cys-107. Asn-94 carries an N-linked (GlcNAc...) asparagine glycan. N-linked (GlcNAc...) asparagine glycosylation is present at Asn-129. SRCR domains follow at residues 135-227, 232-326, 328-428, 434-534, 555-656, 661-761, and 786-886; these read LRLV…VVCS, ARLV…LRCS, FRMV…AVCS, LRLR…VVCS, LSLH…VFCS, LRLR…AGLS, and LRVR…VRCW. 6 disulfide bridges follow: Cys-160–Cys-216, Cys-171–Cys-226, Cys-196–Cys-206, Cys-253–Cys-315, Cys-266–Cys-325, and Cys-297–Cys-307. A glycan (N-linked (GlcNAc...) asparagine) is linked at Asn-332. Intrachain disulfides connect Cys-353–Cys-417, Cys-366–Cys-427, Cys-397–Cys-407, Cys-472–Cys-533, Cys-503–Cys-513, Cys-594–Cys-655, and Cys-625–Cys-635. 2 cysteine pairs are disulfide-bonded: Cys-824-Cys-885 and Cys-855-Cys-865. Residues 907–927 traverse the membrane as a helical segment; the sequence is VVLGSLLGLLLLGLMAFLILP. Topologically, residues 928 to 1027 are cytoplasmic; sequence RVTQAMQRGL…AAFPLEEMTL (100 aa).

In terms of tissue distribution, mainly expressed by CD4(+) and CD8(+) T lymphocytes. Also highly expressed in small intestine and colon. Expressed (at protein level) in small intestine, stomach, gall bladder, and placental villi.

The protein localises to the membrane. Its function is as follows. May play a role in the immune system, perhaps as a co-receptor on alphabeta and gammadelta T-cells. This Homo sapiens (Human) protein is Scavenger receptor cysteine-rich domain-containing protein SCART1.